The sequence spans 459 residues: Serine--tRNA ligase (459 aa).

254 to 256 (TAE) serves as a coordination point for L-serine. Residues 285–287 (RKE) and valine 301 contribute to the ATP site. Glutamate 308 contacts L-serine. 372–375 (EMVS) contacts ATP. Threonine 408 serves as a coordination point for L-serine.

Belongs to the class-II aminoacyl-tRNA synthetase family. Type-1 seryl-tRNA synthetase subfamily. As to quaternary structure, homodimer. The tRNA molecule binds across the dimer.

The protein resides in the cytoplasm. The catalysed reaction is tRNA(Ser) + L-serine + ATP = L-seryl-tRNA(Ser) + AMP + diphosphate + H(+). The enzyme catalyses tRNA(Sec) + L-serine + ATP = L-seryl-tRNA(Sec) + AMP + diphosphate + H(+). It participates in aminoacyl-tRNA biosynthesis; selenocysteinyl-tRNA(Sec) biosynthesis; L-seryl-tRNA(Sec) from L-serine and tRNA(Sec): step 1/1. Its function is as follows. Catalyzes the attachment of serine to tRNA(Ser). Is also able to aminoacylate tRNA(Sec) with serine, to form the misacylated tRNA L-seryl-tRNA(Sec), which will be further converted into selenocysteinyl-tRNA(Sec). This chain is Serine--tRNA ligase, found in Staphylothermus marinus (strain ATCC 43588 / DSM 3639 / JCM 9404 / F1).